Consider the following 395-residue polypeptide: Pyridinium-3,5-bisthiocarboxylic acid mononucleotide nickel insertion protein (395 aa).

The protein belongs to the LarC family.

The catalysed reaction is Ni(II)-pyridinium-3,5-bisthiocarboxylate mononucleotide = pyridinium-3,5-bisthiocarboxylate mononucleotide + Ni(2+). In terms of biological role, involved in the biosynthesis of a nickel-pincer cofactor ((SCS)Ni(II) pincer complex). Binds Ni(2+), and functions in nickel delivery to pyridinium-3,5-bisthiocarboxylic acid mononucleotide (P2TMN), to form the mature cofactor. Is thus probably required for the activation of nickel-pincer cofactor-dependent enzymes. This chain is Pyridinium-3,5-bisthiocarboxylic acid mononucleotide nickel insertion protein, found in Staphylococcus epidermidis (strain ATCC 35984 / DSM 28319 / BCRC 17069 / CCUG 31568 / BM 3577 / RP62A).